The following is a 227-amino-acid chain: Cytochrome c oxidase subunit 2 (227 aa).

Residues 1 to 14 are Mitochondrial intermembrane-facing; that stretch reads MAYPFQLGLQDATS. A helical transmembrane segment spans residues 15–45; that stretch reads PIMEELMNFHDHTLMIVFLISTLVLYIISLM. The Mitochondrial matrix segment spans residues 46–59; it reads LTTKLTHTSTMDAQ. A helical transmembrane segment spans residues 60 to 87; it reads EVETIWTILPAVILILIALPSLRILYMM. The Mitochondrial intermembrane portion of the chain corresponds to 88–227; it reads DEINNPALTV…YFENWSASMI (140 aa). His161, Cys196, Glu198, Cys200, His204, and Met207 together coordinate Cu cation. Glu198 contacts Mg(2+). Tyr218 is modified (phosphotyrosine).

The protein belongs to the cytochrome c oxidase subunit 2 family. Component of the cytochrome c oxidase (complex IV, CIV), a multisubunit enzyme composed of 14 subunits. The complex is composed of a catalytic core of 3 subunits MT-CO1, MT-CO2 and MT-CO3, encoded in the mitochondrial DNA, and 11 supernumerary subunits COX4I, COX5A, COX5B, COX6A, COX6B, COX6C, COX7A, COX7B, COX7C, COX8 and NDUFA4, which are encoded in the nuclear genome. The complex exists as a monomer or a dimer and forms supercomplexes (SCs) in the inner mitochondrial membrane with NADH-ubiquinone oxidoreductase (complex I, CI) and ubiquinol-cytochrome c oxidoreductase (cytochrome b-c1 complex, complex III, CIII), resulting in different assemblies (supercomplex SCI(1)III(2)IV(1) and megacomplex MCI(2)III(2)IV(2)). Found in a complex with TMEM177, COA6, COX18, COX20, SCO1 and SCO2. Interacts with TMEM177 in a COX20-dependent manner. Interacts with COX20. Interacts with COX16. Cu cation serves as cofactor.

Its subcellular location is the mitochondrion inner membrane. The enzyme catalyses 4 Fe(II)-[cytochrome c] + O2 + 8 H(+)(in) = 4 Fe(III)-[cytochrome c] + 2 H2O + 4 H(+)(out). Functionally, component of the cytochrome c oxidase, the last enzyme in the mitochondrial electron transport chain which drives oxidative phosphorylation. The respiratory chain contains 3 multisubunit complexes succinate dehydrogenase (complex II, CII), ubiquinol-cytochrome c oxidoreductase (cytochrome b-c1 complex, complex III, CIII) and cytochrome c oxidase (complex IV, CIV), that cooperate to transfer electrons derived from NADH and succinate to molecular oxygen, creating an electrochemical gradient over the inner membrane that drives transmembrane transport and the ATP synthase. Cytochrome c oxidase is the component of the respiratory chain that catalyzes the reduction of oxygen to water. Electrons originating from reduced cytochrome c in the intermembrane space (IMS) are transferred via the dinuclear copper A center (CU(A)) of subunit 2 and heme A of subunit 1 to the active site in subunit 1, a binuclear center (BNC) formed by heme A3 and copper B (CU(B)). The BNC reduces molecular oxygen to 2 water molecules using 4 electrons from cytochrome c in the IMS and 4 protons from the mitochondrial matrix. This chain is Cytochrome c oxidase subunit 2 (MT-CO2), found in Maxomys surifer (Indomalayan maxomys).